The following is a 419-amino-acid chain: Gamma-glutamyl phosphate reductase (419 aa).

This sequence belongs to the gamma-glutamyl phosphate reductase family.

Its subcellular location is the cytoplasm. The enzyme catalyses L-glutamate 5-semialdehyde + phosphate + NADP(+) = L-glutamyl 5-phosphate + NADPH + H(+). Its pathway is amino-acid biosynthesis; L-proline biosynthesis; L-glutamate 5-semialdehyde from L-glutamate: step 2/2. Catalyzes the NADPH-dependent reduction of L-glutamate 5-phosphate into L-glutamate 5-semialdehyde and phosphate. The product spontaneously undergoes cyclization to form 1-pyrroline-5-carboxylate. This Caldicellulosiruptor bescii (strain ATCC BAA-1888 / DSM 6725 / KCTC 15123 / Z-1320) (Anaerocellum thermophilum) protein is Gamma-glutamyl phosphate reductase.